Here is a 352-residue protein sequence, read N- to C-terminus: Isoflavone-7-O-methyltransferase 6 (352 aa).

118–127 (VLDPTLSGSY) provides a ligand contact to substrate. Positions 196, 219, 239, 240, and 253 each coordinate S-adenosyl-L-methionine. The Proton acceptor role is filled by H257.

It belongs to the class I-like SAM-binding methyltransferase superfamily. Cation-independent O-methyltransferase family. COMT subfamily. In terms of assembly, homodimer.

It carries out the reaction a 7-hydroxyisoflavone + S-adenosyl-L-methionine = a 7-methoxyisoflavone + S-adenosyl-L-homocysteine + H(+). It participates in phytoalexin biosynthesis; medicarpin biosynthesis. Its function is as follows. Transfers a methyl group to 7-hydroxyls of the isoflavones daidzein, genistein and 6,7,4'-trihydroxyisoflavone. Can also methylate (+)6a-hydroxymaackiain with lower efficiency. This Medicago sativa (Alfalfa) protein is Isoflavone-7-O-methyltransferase 6.